Consider the following 244-residue polypeptide: Glucosamine-6-phosphate deaminase (244 aa).

The active-site Proton acceptor; for enolization step is the aspartate 67. The active-site For ring-opening step is asparagine 133. Histidine 135 functions as the Proton acceptor; for ring-opening step in the catalytic mechanism. Glutamate 140 (for ring-opening step) is an active-site residue.

The protein belongs to the glucosamine/galactosamine-6-phosphate isomerase family. NagB subfamily.

The catalysed reaction is alpha-D-glucosamine 6-phosphate + H2O = beta-D-fructose 6-phosphate + NH4(+). It functions in the pathway amino-sugar metabolism; N-acetylneuraminate degradation; D-fructose 6-phosphate from N-acetylneuraminate: step 5/5. Its function is as follows. Catalyzes the reversible isomerization-deamination of glucosamine 6-phosphate (GlcN6P) to form fructose 6-phosphate (Fru6P) and ammonium ion. The sequence is that of Glucosamine-6-phosphate deaminase from Mycoplasma mycoides subsp. mycoides SC (strain CCUG 32753 / NCTC 10114 / PG1).